A 506-amino-acid polypeptide reads, in one-letter code: ATP synthase subunit alpha (506 aa).

Residue 170–177 (GDRQTGKT) coordinates ATP.

Belongs to the ATPase alpha/beta chains family. In terms of assembly, F-type ATPases have 2 components, CF(1) - the catalytic core - and CF(0) - the membrane proton channel. CF(1) has five subunits: alpha(3), beta(3), gamma(1), delta(1), epsilon(1). CF(0) has four main subunits: a(1), b(1), b'(1) and c(9-12).

It is found in the cellular thylakoid membrane. It catalyses the reaction ATP + H2O + 4 H(+)(in) = ADP + phosphate + 5 H(+)(out). Produces ATP from ADP in the presence of a proton gradient across the membrane. The alpha chain is a regulatory subunit. In Synechococcus sp. (strain WH7803), this protein is ATP synthase subunit alpha.